The primary structure comprises 190 residues: Putative resolvase R771 (190 aa).

A DNA-binding region (H-T-H motif) is located at residues 11–30 (SSVLGVHQRTLYQWDKKGWI). Positions 61–190 (LSICYVRVSS…RNGLKKYSNK (130 aa)) constitute a Resolvase/invertase-type recombinase catalytic domain. Residues 66 to 92 (VRVSSNNQKDDLERQIKFMKKKYPNHT) are a coiled coil. The active-site O-(5'-phospho-DNA)-serine intermediate is the Ser-69.

It belongs to the site-specific recombinase resolvase family.

In terms of biological role, resolvase catalyzes the resolution (a site-specific recombination) of the cointegrated replicon to yield the final transposition products. The sequence is that of Putative resolvase R771 from Acanthamoeba polyphaga (Amoeba).